Consider the following 192-residue polypeptide: Cytochrome b-245 light chain (192 aa).

At 2 to 7 (GQIEWA) the chain is on the cytoplasmic side. The chain crosses the membrane as a helical span at residues 8–30 (MWANEQALASGLILMTGGIVATA). Topologically, residues 31 to 35 (GQFTQ) are extracellular. A helical membrane pass occupies residues 36-53 (WYLGTYSIAAGVLVCLLE). At 54-69 (YPRGRRTKGSTMERCE) the chain is on the cytoplasmic side. Residues 70–80 (QKYMTKVVKAF) lie within the membrane without spanning it. The Cytoplasmic segment spans residues 81-86 (GPLSRN). The chain crosses the membrane as a helical span at residues 87 to 104 (YYIRAFLHLGLSVPAGFL). Leucine 105 is a topological domain (extracellular). The chain crosses the membrane as a helical span at residues 106 to 126 (ATILGTACLAIASGIYLLAAI). Residues 127–192 (RGEQWTPIEP…TPCPVTDEVV (66 aa)) are Cytoplasmic-facing. The segment at 134–192 (IEPKPKERPQVGGTIKQPPSNPPPRPPPEARKKPGEEAVAGVPRGAPRKTPCPVTDEVV) is disordered. Threonine 147 carries the post-translational modification Phosphothreonine. Lysine 149 is covalently cross-linked (Glycyl lysine isopeptide (Lys-Gly) (interchain with G-Cter in ubiquitin)).

This sequence belongs to the p22phox family. In terms of assembly, component of the phagocyte NADPH oxidase core complex/cytochrome b558 complex, composed of CYBB (heavy chain (beta)) and CYBA (light chain (alpha)). Component of the phagocyte NADPH oxidase complex composed of an obligatory core heterodimer formed by the membrane proteins CYBA and CYBB and the cytosolic regulatory subunits NCF1/p47-phox, NCF2/p67-phox, NCF4/p40-phox and the small GTPase RAC1 or RAC2. Interacts with NCF1 (via SH3 domain). Interacts with SH3PXD2A. Interacts with DUOX1, DUOX2 and TPO. Interacts with NOX4; this interaction mediates superoxide generation. Interacts with calprotectin (S100A8/9). Interacts with GBP7. Interacts with NOXO1. Forms a heterodimer with NOX3 and is essential for activity and cell membrane localization of NOX3. Interacts with NOX1. In terms of processing, phosphorylation at Thr-147 enhances NADPH oxidase activity by promoting NCF1/p47-phox binding. Post-translationally, ubiquitinated at Lys-149 likely by RNF145.

It is found in the cell membrane. In terms of biological role, subunit of NADPH oxidase complexes that is required for the NADPH oxidase activity that generates, in various cell types, superoxide from molecular oxygen utilizing NADPH as an electron donor. Subunit of the phagocyte NADPH oxidase complex that mediates the transfer of electrons from cytosolic NADPH to O2 to produce the superoxide anion (O2(-)). In the activated complex, electrons are first transferred from NADPH to flavin adenine dinucleotide (FAD) and subsequently transferred via two heme molecules to molecular oxygen, producing superoxide through an outer-sphere reaction. Activation of the NADPH oxidase complex is initiated by the assembly of cytosolic subunits of the NADPH oxidase complex with the core NADPH oxidase complex to form a complex at the plasma membrane or phagosomal membrane. This activation process is initiated by phosphorylation dependent binding of the cytosolic NCF1/p47-phox subunit to the C-terminus of CYBA/p22-phox. Aassociates with NOX3 to form a functional NADPH oxidase constitutively generating superoxide. The chain is Cytochrome b-245 light chain from Sus scrofa (Pig).